Here is a 194-residue protein sequence, read N- to C-terminus: Type II methyltransferase M.MjaVI (194 aa).

Belongs to the N(4)/N(6)-methyltransferase family. N(4) subfamily.

The catalysed reaction is a 2'-deoxycytidine in DNA + S-adenosyl-L-methionine = an N(4)-methyl-2'-deoxycytidine in DNA + S-adenosyl-L-homocysteine + H(+). Functionally, a beta subtype methylase that recognizes the double-stranded sequence 5'-CCGG-3', methylates C-1 on both strands, and protects the DNA from cleavage by the MjaVI endonuclease. This chain is Type II methyltransferase M.MjaVI (mjaVIM), found in Methanocaldococcus jannaschii (strain ATCC 43067 / DSM 2661 / JAL-1 / JCM 10045 / NBRC 100440) (Methanococcus jannaschii).